We begin with the raw amino-acid sequence, 210 residues long: Protein GrpE (210 aa).

The tract at residues 191–210 (KGGPKPAEAETNSVFDEKDA) is disordered.

This sequence belongs to the GrpE family. In terms of assembly, homodimer.

The protein localises to the cytoplasm. Its function is as follows. Participates actively in the response to hyperosmotic and heat shock by preventing the aggregation of stress-denatured proteins, in association with DnaK and GrpE. It is the nucleotide exchange factor for DnaK and may function as a thermosensor. Unfolded proteins bind initially to DnaJ; upon interaction with the DnaJ-bound protein, DnaK hydrolyzes its bound ATP, resulting in the formation of a stable complex. GrpE releases ADP from DnaK; ATP binding to DnaK triggers the release of the substrate protein, thus completing the reaction cycle. Several rounds of ATP-dependent interactions between DnaJ, DnaK and GrpE are required for fully efficient folding. The chain is Protein GrpE from Rhizobium etli (strain CIAT 652).